Reading from the N-terminus, the 508-residue chain is Pyruvate kinase 2 (508 aa).

A substrate-binding site is contributed by arginine 50. The K(+) site is built by asparagine 52, serine 54, aspartate 85, and threonine 86. 52–55 (NFSH) is a binding site for ATP. Arginine 92 and lysine 178 together coordinate ATP. Residue glutamate 243 participates in Mg(2+) binding. Substrate is bound by residues glycine 266, aspartate 267, and threonine 299. A Mg(2+)-binding site is contributed by aspartate 267.

This sequence belongs to the pyruvate kinase family. As to quaternary structure, homotetramer. Requires Mg(2+) as cofactor. K(+) is required as a cofactor.

It catalyses the reaction pyruvate + ATP = phosphoenolpyruvate + ADP + H(+). Its pathway is carbohydrate degradation; glycolysis; pyruvate from D-glyceraldehyde 3-phosphate: step 5/5. This chain is Pyruvate kinase 2 (PYK2), found in Candida glabrata (strain ATCC 2001 / BCRC 20586 / JCM 3761 / NBRC 0622 / NRRL Y-65 / CBS 138) (Yeast).